A 368-amino-acid chain; its full sequence is 1-deoxy-D-xylulose 5-phosphate reductoisomerase (368 aa).

Residues threonine 7, glycine 8, serine 9, isoleucine 10, glycine 31, lysine 32, asparagine 33, and asparagine 113 each coordinate NADPH. Position 114 (lysine 114) interacts with 1-deoxy-D-xylulose 5-phosphate. An NADPH-binding site is contributed by glutamate 115. Position 133 (aspartate 133) interacts with Mn(2+). 1-deoxy-D-xylulose 5-phosphate contacts are provided by serine 134, glutamate 135, serine 158, and histidine 181. Residue glutamate 135 participates in Mn(2+) binding. Glycine 187 contacts NADPH. 4 residues coordinate 1-deoxy-D-xylulose 5-phosphate: serine 194, asparagine 199, lysine 200, and glutamate 203. Glutamate 203 provides a ligand contact to Mn(2+).

Belongs to the DXR family. Mg(2+) is required as a cofactor. It depends on Mn(2+) as a cofactor.

It carries out the reaction 2-C-methyl-D-erythritol 4-phosphate + NADP(+) = 1-deoxy-D-xylulose 5-phosphate + NADPH + H(+). It participates in isoprenoid biosynthesis; isopentenyl diphosphate biosynthesis via DXP pathway; isopentenyl diphosphate from 1-deoxy-D-xylulose 5-phosphate: step 1/6. Functionally, catalyzes the NADPH-dependent rearrangement and reduction of 1-deoxy-D-xylulose-5-phosphate (DXP) to 2-C-methyl-D-erythritol 4-phosphate (MEP). This is 1-deoxy-D-xylulose 5-phosphate reductoisomerase from Helicobacter pylori (strain P12).